A 348-amino-acid chain; its full sequence is Mitogen-activated protein kinase 14B (348 aa).

The 285-residue stretch at Tyr-25–Phe-309 folds into the Protein kinase domain. Residues Val-31 to Val-39 and Lys-54 contribute to the ATP site. Residue Asp-169 is the Proton acceptor of the active site. Thr-181 carries the phosphothreonine; by MAP2K3 modification. Positions Thr-181–Tyr-183 match the TXY motif. Tyr-183 is modified (phosphotyrosine; by MAP2K3).

This sequence belongs to the protein kinase superfamily. CMGC Ser/Thr protein kinase family. MAP kinase subfamily. The cofactor is Mg(2+). In terms of processing, dually phosphorylated on Thr-181 and Tyr-183, which activates the enzyme.

The protein resides in the cytoplasm. Its subcellular location is the nucleus. It carries out the reaction L-seryl-[protein] + ATP = O-phospho-L-seryl-[protein] + ADP + H(+). The catalysed reaction is L-threonyl-[protein] + ATP = O-phospho-L-threonyl-[protein] + ADP + H(+). With respect to regulation, activated by threonine and tyrosine phosphorylation by the dual specificity kinase, MKK3. In terms of biological role, serine/threonine kinase which acts as an essential component of the MAP kinase signal transduction pathway. Mapk14b is one of the four p38 MAPKs which play an important role in the cascades of cellular responses evoked by extracellular stimuli such as pro-inflammatory cytokines or physical stress leading to direct activation of transcription factors. Accordingly, p38 MAPKs phosphorylate a broad range of proteins and it has been estimated that they may have approximately 200 to 300 substrates each. Some of the targets are downstream kinases which are activated through phosphorylation and further phosphorylate additional targets. The chain is Mitogen-activated protein kinase 14B (mapk14b) from Danio rerio (Zebrafish).